A 453-amino-acid chain; its full sequence is Crh-like protein CRH11 (453 aa).

The first 21 residues, Met1 to Ala21, serve as a signal peptide directing secretion. A disulfide bond links Cys24 and Cys32. The 200-residue stretch at Lys28 to Gln227 folds into the GH16 domain. The active-site Nucleophile is the Glu119. Glu123 serves as the catalytic Proton donor. Chitin is bound by residues Glu123, Trp204, and Thr215. Disordered stretches follow at residues Leu281 to Ser343, Lys362 to Ala397, and Gly410 to Asn430. Low complexity-rich tracts occupy residues Ser286–Ser343, Thr363–Ala397, and Ala412–Ser425. Asn290 carries an N-linked (GlcNAc...) asparagine glycan. Asn430 is lipidated: GPI-anchor amidated asparagine. Positions Gly431–Val453 are cleaved as a propeptide — removed in mature form.

Belongs to the glycosyl hydrolase 16 family. CRH1 subfamily. The GPI-anchor is attached to the protein in the endoplasmic reticulum and serves to target the protein to the cell surface. There, the glucosamine-inositol phospholipid moiety is cleaved off and the GPI-modified mannoprotein is covalently attached via its lipidless GPI glycan remnant to the 1,6-beta-glucan of the outer cell wall layer.

It localises to the secreted. The protein localises to the cell wall. The protein resides in the membrane. It carries out the reaction Random endo-hydrolysis of N-acetyl-beta-D-glucosaminide (1-&gt;4)-beta-linkages in chitin and chitodextrins.. Dual chitinase/transglycosylase that plays a role in cell wall architecture. Chitinase and transglycosylase activities are coupled. Required for the polysaccharide cross-linking at the septa and the cell wall. More specifically, transfers chitin to 1,6-beta-glucan in the cell wall. Plays an important role in fungal pathogenesis via its functions in cell wall assembly and regeneration, filamentation, and adherence to host cells. This is Crh-like protein CRH11 (CRH11) from Candida albicans (strain SC5314 / ATCC MYA-2876) (Yeast).